A 256-amino-acid polypeptide reads, in one-letter code: Major prion protein (256 aa).

Residues Met1–Cys24 form the signal peptide. Positions Lys25–Ala233 are interaction with GRB2, ERI3 and SYN1. The interval Pro28 to Thr110 is disordered. Tandem repeats lie at residues Pro54 to Gln62, Pro63 to Gln70, Pro71 to Gln78, Pro79 to Gln86, and Pro87 to Gln95. The segment at Pro54–Gln95 is 5 X 8 AA tandem repeats of P-H-G-G-G-W-G-Q. The segment covering Gln55–Gly97 has biased composition (gly residues). Cu(2+)-binding residues include His64, Gly65, Gly66, His72, Gly73, Gly74, His80, Gly81, Gly82, His88, Gly90, and Gly91. The cysteines at positions 182 and 217 are disulfide-linked. Asn184 and Asn200 each carry an N-linked (GlcNAc...) asparagine glycan. Ala233 carries the GPI-anchor amidated alanine lipid modification. The propeptide at Ser234–Gly256 is removed in mature form.

This sequence belongs to the prion family. As to quaternary structure, monomer and homodimer. Has a tendency to aggregate into amyloid fibrils containing a cross-beta spine, formed by a steric zipper of superposed beta-strands. Soluble oligomers may represent an intermediate stage on the path to fibril formation. Copper binding may promote oligomerization. Interacts with GRB2, APP, ERI3/PRNPIP and SYN1. Mislocalized cytosolically exposed PrP interacts with MGRN1; this interaction alters MGRN1 subcellular location and causes lysosomal enlargement. Interacts with KIAA1191.

The protein resides in the cell membrane. Its subcellular location is the golgi apparatus. In terms of biological role, its primary physiological function is unclear. Has cytoprotective activity against internal or environmental stresses. May play a role in neuronal development and synaptic plasticity. May be required for neuronal myelin sheath maintenance. May play a role in iron uptake and iron homeostasis. Soluble oligomers are toxic to cultured neuroblastoma cells and induce apoptosis (in vitro). Association with GPC1 (via its heparan sulfate chains) targets PRNP to lipid rafts. Also provides Cu(2+) or Zn(2+) for the ascorbate-mediated GPC1 deaminase degradation of its heparan sulfate side chains. The chain is Major prion protein (PRNP) from Budorcas taxicolor (Golden takin).